Consider the following 154-residue polypeptide: Prefoldin subunit 5 (154 aa).

Residue Ala-2 is modified to N-acetylalanine. Position 42 is an N6-acetyllysine (Lys-42). Ser-56 bears the Phosphoserine mark.

This sequence belongs to the prefoldin subunit alpha family. In terms of assembly, heterohexamer of two PFD-alpha type and four PFD-beta type subunits.

It localises to the nucleus. Functionally, binds specifically to cytosolic chaperonin (c-CPN) and transfers target proteins to it. Binds to nascent polypeptide chain and promotes folding in an environment in which there are many competing pathways for nonnative proteins. Represses the transcriptional activity of MYC. The sequence is that of Prefoldin subunit 5 (PFDN5) from Pongo abelii (Sumatran orangutan).